Consider the following 392-residue polypeptide: MNIHEYQGKGILKQFGVAVPKGIVAFSAEEAKQAAAELFEEQSSPVVVVKAQIHAGGRGKAGGVKLAKSPEEVYEIAQKMLGTTLVTHQTGPEGKEVRRLLIEEGMNIDKEFYLGITLDRATSCNVLMVSTEGGMEIEKVAEETPEKLLKIQVNPKYGLQGFQAREAALFLGMQGEQFRNGVKFIDALYKAYTTIDASLAEINPLVVTKEGRVLALDAKINFDDNAMYRHPDFHELRDITEEDPLEYEASKSNLNYVRLDGNVGCMVNGAGLAMGTMDLIQLAGGKPANFLDVGGGASPKTVEEGFKIILGDKNVKAILVNVFGGIVRCDRVAGGVIEAAKNIGLTVPVIVRLEGTNAKEAQKMLDESGLSLIAANGLRDAAEKVQKALASA.

Positions 9-248 (KGILKQFGVA…ITEEDPLEYE (240 aa)) constitute an ATP-grasp domain. Residues Lys-50, 57–59 (GRG), Glu-103, Met-106, and Glu-111 each bind ATP. 2 residues coordinate Mg(2+): Asn-203 and Asp-217. Residues Asn-268 and 325–327 (GIV) contribute to the substrate site.

The protein belongs to the succinate/malate CoA ligase beta subunit family. As to quaternary structure, heterotetramer of two alpha and two beta subunits. The cofactor is Mg(2+).

The enzyme catalyses succinate + ATP + CoA = succinyl-CoA + ADP + phosphate. It catalyses the reaction GTP + succinate + CoA = succinyl-CoA + GDP + phosphate. It functions in the pathway carbohydrate metabolism; tricarboxylic acid cycle; succinate from succinyl-CoA (ligase route): step 1/1. Its function is as follows. Succinyl-CoA synthetase functions in the citric acid cycle (TCA), coupling the hydrolysis of succinyl-CoA to the synthesis of either ATP or GTP and thus represents the only step of substrate-level phosphorylation in the TCA. The beta subunit provides nucleotide specificity of the enzyme and binds the substrate succinate, while the binding sites for coenzyme A and phosphate are found in the alpha subunit. This Chlorobaculum parvum (strain DSM 263 / NCIMB 8327) (Chlorobium vibrioforme subsp. thiosulfatophilum) protein is Succinate--CoA ligase [ADP-forming] subunit beta.